The sequence spans 629 residues: Probable indole-3-acetic acid-amido synthetase GH3.4 (629 aa).

It belongs to the IAA-amido conjugating enzyme family. As to expression, expressed in flowers.

May catalyze the synthesis of indole-3-acetic acid (IAA)-amino acid conjugates, providing a mechanism for the plant to cope with the presence of excess auxin. The protein is Probable indole-3-acetic acid-amido synthetase GH3.4 (GH3.4) of Oryza sativa subsp. japonica (Rice).